Here is a 375-residue protein sequence, read N- to C-terminus: tRNA-specific 2-thiouridylase MnmA (375 aa).

Residues 16–23 and M42 contribute to the ATP site; that span reads GMSGGVDS. The interval 102-104 is interaction with target base in tRNA; it reads NPD. C107 serves as the catalytic Nucleophile. C107 and C203 are joined by a disulfide. G131 is a binding site for ATP. The segment at 153 to 155 is interaction with tRNA; it reads KDQ. Catalysis depends on C203, which acts as the Cysteine persulfide intermediate. The segment at 315 to 316 is interaction with tRNA; it reads RY.

This sequence belongs to the MnmA/TRMU family.

It localises to the cytoplasm. It catalyses the reaction S-sulfanyl-L-cysteinyl-[protein] + uridine(34) in tRNA + AH2 + ATP = 2-thiouridine(34) in tRNA + L-cysteinyl-[protein] + A + AMP + diphosphate + H(+). Catalyzes the 2-thiolation of uridine at the wobble position (U34) of tRNA, leading to the formation of s(2)U34. In Pseudomonas aeruginosa (strain LESB58), this protein is tRNA-specific 2-thiouridylase MnmA.